The sequence spans 1306 residues: MLTSSSHHGRSYDVFLSFRGEDTRKTFVGHLFNALIEKGIHTFMDDKELKRGKSISSELMKAIGESRFAVVVFSKNYASSTWCLEELVKILEIHEKFELIVVPVFYDVDPSTVRKQNGEYAVCFTKFEANLVDDRDKVLRWREALTKVANISGHDLRNTYNGDESKCIQQILKDIFDKFCFSISITNRDLVGIESQIKKLSSLLRMDLKGVRLVGIWGMGGVGKTTAARALFNRYYQNFESACFLEDVKEYLQHHTLLYLQKTLLSKLLKVEFVDCTDTEEMCVILKRRLCSKKVLVVLDDVNHNDQLDKLVGAEDWFGSGSRIVITTRDMKLLKNHDVHETYEIKVLEKDEAIELFNLHAFKRSSPEKEFKELLNLVVDYTGGLPLALKVLGSLLYKEDLDVWISTIDRLKDNPEGEIMATLKISFDGLRDYEKSIFLDIACFFRGYNQRDMTALFHASGFHPVLGVKTLVEKSLIFILEDKIQMHDLMQEMGRQIAVQESPMRRIYRPEDVKDACIGDMRKEAIEGLLLTEPEQFEEGELEYMYSAEALKKTRRLRILVKEYYNRGFDEPVAYLPNSLLWLEWRNYSSNSFPSNFEPSKLVYLTMKGSSIIELWNGAKRLAFLTTLDLSYCHKLIQTPDFRMITNLERLILSSCDALVEVHPSVGFLKNLILLNMDHCISLERLPAIIQSECLEVLDLNYCFNLKMFPEVERNMTHLKKLDLTSTGIRELPASIEHLSSLENLQMHSCNQLVSLPSSIWRFRNLKISECEKLGSLPEIHGNSNCTRELILKLVSIKELPTSIGNLTSLNFLEICNCKTISSLSSSIWGLTSLTTLKLLDCRKLKNLPGIPNAINHLSGHGLQLLLTLEQPTIYERLDLLRIIDMSWCSCISSLPHNIWMLKFLRILCISYCSRLEYLPENLGHLEHLEELLADGTGILRLPSSVARLNKLEVLSFRKKFAIGPKVQYSSSMLNLPDDVFGSLGSLGSVVKLNLSGNGFCNLPETMNQLFCLEYLDITFCQRLEALPELPPSIKELYVDEHLALRIMEDLVIKCKELNLIAVTKIEYQNFYRWLDSIWSDVSELLENSQKQQLDDMLQLIPFSYLSTAKREEVLKIVIHGTRIPEWFRWQDRSATTMSVNLPEYWYTENFLGFAICCSCCFYHSARSYDVEFEGSMHHYNYDSSYWKEYEEPSYDFYERDSIEITAKLTPRHKGMRTEELKKVCSFSMNVLRRATAVPNMCFAFFPFNSLCHISNLQANNPNDYGIFETCLSPGDIRHRGKQWGFNLVYKDETGGSVTHEMLINR.

A TIR domain is found at 10 to 179 (RSYDVFLSFR…QILKDIFDKF (170 aa)). NAD(+) is bound by residues 19–24 (RGEDTR) and Gly-52. Residue Glu-86 is part of the active site. The NB-ARC domain occupies 198–417 (KKLSSLLRMD…IDRLKDNPEG (220 aa)). 18 LRR repeats span residues 200 to 224 (LSSL…GVGK), 252 to 275 (LQHH…EFVD), 417 to 440 (GEIM…IFLD), 599 to 622 (PSKL…AKRL), 645 to 669 (ITNL…VGFL), 670 to 693 (KNLI…IQSE), 716 to 739 (MTHL…IEHL), 741 to 763 (SLEN…IWRF), 784 to 807 (SNCT…IGNL), 808 to 831 (TSLN…IWGL), 832 to 857 (TSLT…AINH), 878 to 902 (LDLL…IWML), 904 to 926 (FLRI…LGHL), 927 to 949 (EHLE…VARL), 961 to 983 (FAIG…VFGS), 987 to 1010 (LGSV…MNQL), 1013 to 1036 (LEYL…SIKE), and 1045 to 1070 (LRIM…EYQN).

The protein belongs to the disease resistance TIR-NB-LRR family. Homodimer.

The enzyme catalyses NAD(+) + H2O = ADP-D-ribose + nicotinamide + H(+). It carries out the reaction NAD(+) = 2'cADPR + nicotinamide + H(+). Functionally, disease resistance (R) protein that specifically recognizes the Xanthomonas and Pseudomonas effector proteins XopQ and HopQ1, and triggers cell death. An NAD(+) hydrolase (NADase): in response to activation, catalyzes cleavage of NAD(+) into ADP-D-ribose (ADPR) and nicotinamide; NAD(+) cleavage triggers a defense system that promotes cell death. Makes small amounts of 2' cyclic ADPR (2'cADPR). This chain is Disease resistance protein Roq1, found in Nicotiana benthamiana.